Consider the following 1128-residue polypeptide: Nck-associated protein 1 (1128 aa).

The residue at position 2 (Ser-2) is an N-acetylserine. The disordered stretch occupies residues 640–665 (AVNKKSKKQTGKKGEPEREKPGVESM). Residues 651 to 665 (KKGEPEREKPGVESM) are compositionally biased toward basic and acidic residues. A helical membrane pass occupies residues 995 to 1015 (IACLLMVFVAVSLPTLASNVM).

Belongs to the HEM-1/HEM-2 family. As to quaternary structure, component of the WAVE1 complex composed of ABI2, CYFIP1 or CYFIP2, BRK1, NCKAP1 and WASF1/WAVE1. Within the complex, a heterodimer containing NCKAP1 and CYFIP1 interacts with a heterotrimer formed by WAVE1, ABI2 and BRK1. Component of the WAVE2 complex composed of ABI1, CYFIP1/SRA1, NCKAP1/NAP1 and WASF2/WAVE2. CYFIP2 binds to activated RAC1 which causes the complex to dissociate, releasing activated WASF1. The complex can also be activated by NCK1. Associates preferentially with the first SH3 domain of NCK. Interacts with NYAP1, NYAP2 and MYO16. Interacts with TMEM132D. In terms of tissue distribution, preferentially expressed in brain, heart, liver and testis.

It localises to the cell membrane. The protein localises to the cell projection. The protein resides in the lamellipodium membrane. Its function is as follows. Part of the WAVE complex that regulates lamellipodia formation. The WAVE complex regulates actin filament reorganization via its interaction with the Arp2/3 complex. Actin remodeling activity is regulated by RAC1. As component of the WAVE1 complex, required for BDNF-NTRK2 endocytic trafficking and signaling from early endosomes. In Rattus norvegicus (Rat), this protein is Nck-associated protein 1 (Nckap1).